A 502-amino-acid polypeptide reads, in one-letter code: Cytochrome P450 93A2 (502 aa).

Cysteine 440 contacts heme.

It belongs to the cytochrome P450 family. It depends on heme as a cofactor.

It localises to the membrane. The polypeptide is Cytochrome P450 93A2 (CYP93A2) (Glycine max (Soybean)).